The chain runs to 163 residues: MFMINNYLNEIWLIIGIICILVECYIVQNMGFLFLGLGALSNSLFVYNKPLVIFTLTNQITFFGLFSLVWFCILYYPLKKYVYNKTDKTKSYSDMIGKTVEVYSPTVSSNTIGQVKWSGAIMNAYLAPNEIDAKIGEQLFIIGVKGNILICSKHRFNNNADYC.

The next 2 membrane-spanning stretches (helical) occupy residues 7 to 27 and 51 to 71; these read YLNE…CYIV and LVIF…LVWF.

It localises to the cell membrane. This is an uncharacterized protein from Rickettsia prowazekii (strain Madrid E).